Consider the following 95-residue polypeptide: Aspartyl/glutamyl-tRNA(Asn/Gln) amidotransferase subunit C (95 aa).

This sequence belongs to the GatC family. In terms of assembly, heterotrimer of A, B and C subunits.

The enzyme catalyses L-glutamyl-tRNA(Gln) + L-glutamine + ATP + H2O = L-glutaminyl-tRNA(Gln) + L-glutamate + ADP + phosphate + H(+). It catalyses the reaction L-aspartyl-tRNA(Asn) + L-glutamine + ATP + H2O = L-asparaginyl-tRNA(Asn) + L-glutamate + ADP + phosphate + 2 H(+). Allows the formation of correctly charged Asn-tRNA(Asn) or Gln-tRNA(Gln) through the transamidation of misacylated Asp-tRNA(Asn) or Glu-tRNA(Gln) in organisms which lack either or both of asparaginyl-tRNA or glutaminyl-tRNA synthetases. The reaction takes place in the presence of glutamine and ATP through an activated phospho-Asp-tRNA(Asn) or phospho-Glu-tRNA(Gln). The sequence is that of Aspartyl/glutamyl-tRNA(Asn/Gln) amidotransferase subunit C from Ruegeria pomeroyi (strain ATCC 700808 / DSM 15171 / DSS-3) (Silicibacter pomeroyi).